We begin with the raw amino-acid sequence, 361 residues long: RNA 3'-terminal phosphate cyclase (361 aa).

Residues Gln109 and 293 to 297 (HLADQ) contribute to the ATP site. Catalysis depends on His319, which acts as the Tele-AMP-histidine intermediate.

The protein belongs to the RNA 3'-terminal cyclase family. Type 1 subfamily.

The protein localises to the cytoplasm. The enzyme catalyses a 3'-end 3'-phospho-ribonucleotide-RNA + ATP = a 3'-end 2',3'-cyclophospho-ribonucleotide-RNA + AMP + diphosphate. Its function is as follows. Catalyzes the conversion of 3'-phosphate to a 2',3'-cyclic phosphodiester at the end of RNA. The mechanism of action of the enzyme occurs in 3 steps: (A) adenylation of the enzyme by ATP; (B) transfer of adenylate to an RNA-N3'P to produce RNA-N3'PP5'A; (C) and attack of the adjacent 2'-hydroxyl on the 3'-phosphorus in the diester linkage to produce the cyclic end product. The biological role of this enzyme is unknown but it is likely to function in some aspects of cellular RNA processing. This chain is RNA 3'-terminal phosphate cyclase, found in Methylococcus capsulatus (strain ATCC 33009 / NCIMB 11132 / Bath).